Consider the following 202-residue polypeptide: Phosphoenolpyruvate guanylyltransferase (202 aa).

Positions 140, 156, and 159 each coordinate phosphoenolpyruvate.

The protein belongs to the CofC family.

It carries out the reaction phosphoenolpyruvate + GTP + H(+) = enolpyruvoyl-2-diphospho-5'-guanosine + diphosphate. It functions in the pathway cofactor biosynthesis; coenzyme F420 biosynthesis. Functionally, guanylyltransferase that catalyzes the activation of phosphoenolpyruvate (PEP) as enolpyruvoyl-2-diphospho-5'-guanosine, via the condensation of PEP with GTP. It is involved in the biosynthesis of coenzyme F420, a hydride carrier cofactor. The polypeptide is Phosphoenolpyruvate guanylyltransferase (Chloroflexus aggregans (strain MD-66 / DSM 9485)).